The sequence spans 288 residues: Polyamine aminopropyltransferase (288 aa).

One can recognise a PABS domain in the interval 11 to 245 (IEWYPRGYGV…SPWSFLVGVK (235 aa)). Q36 contributes to the S-methyl-5'-thioadenosine binding site. Spermidine is bound by residues H67 and D91. S-methyl-5'-thioadenosine-binding positions include E111 and 148 to 149 (DG). Residue D166 is the Proton acceptor of the active site. 166–169 (DSTD) provides a ligand contact to spermidine. P173 is an S-methyl-5'-thioadenosine binding site.

The protein belongs to the spermidine/spermine synthase family. Homodimer or homotetramer.

It localises to the cytoplasm. The enzyme catalyses S-adenosyl 3-(methylsulfanyl)propylamine + agmatine = N(1)-(3-aminopropyl)agmatine + S-methyl-5'-thioadenosine + H(+). It catalyses the reaction S-adenosyl 3-(methylsulfanyl)propylamine + putrescine = S-methyl-5'-thioadenosine + spermidine + H(+). It carries out the reaction cadaverine + S-adenosyl 3-(methylsulfanyl)propylamine = aminopropylcadaverine + S-methyl-5'-thioadenosine + H(+). Its pathway is amine and polyamine biosynthesis; spermidine biosynthesis; spermidine from putrescine: step 1/1. Its function is as follows. Involved in the biosynthesis of polyamines which are thought to support the growth of thermophilic microorganisms under high-temperature conditions. It seems that long-chain and branched-chain of polyamines effectively stabilize DNA and RNA, respectively. Catalyzes the irreversible transfer of a propylamine group from the amino donor S-adenosylmethioninamine (decarboxy-AdoMet) to agmatine to yield N1-aminopropylagmatine. It can also use cadaverine (1,5-diaminopentane) and putrescine (1,4-diaminobutane) as substrate with a lower activity than that of agmatine. The reaction involves a nucleophilic attack on the C-3 methylene of the propylamine moiety adjacent to the positively charged sulfur of decarboxy-AdoMet. In Thermococcus kodakarensis (strain ATCC BAA-918 / JCM 12380 / KOD1) (Pyrococcus kodakaraensis (strain KOD1)), this protein is Polyamine aminopropyltransferase.